Here is a 1192-residue protein sequence, read N- to C-terminus: Probable ATP-binding protein BrxC (1192 aa).

Belongs to the BrxC family.

Its function is as follows. BREX systems (bacteriophage exclusion) provide immunity against bacteriophage. A core protein of a type 1 BREX system. This system allows phage adsorption but prevents phage DNA replication, without degradation of the phage DNA. Methylation of bacterial DNA by PglX probably guides self/non-self discrimination. When the brxA-brxB-brxC-pglX and pglZ-brxL operons are transformed into a susceptible B.subtilis strain (BEST7003) they confer resistance to bacteriophages SPbeta, SP16, Zeta, phi3T and SP02 and partial protection to phages SP01 and SP82G (these include lytic and temperate phage). They do not protect against phages phi105, rho10 or rho14. Additionally confers a very slight reduction in efficiency of plasmid transformation. The protein is Probable ATP-binding protein BrxC of Bacillus cereus (strain H3081.97).